Reading from the N-terminus, the 142-residue chain is Mediator of RNA polymerase II transcription subunit 21 (142 aa).

The stretch at 87–131 forms a coiled coil; it reads AEEQLSRIDSLQKKLIQVEGEKIEAIKRKESLTKDIEELINEFTE.

Belongs to the Mediator complex subunit 21 family. As to quaternary structure, component of the Mediator complex.

Its subcellular location is the nucleus. Component of the Mediator complex, a coactivator involved in the regulated transcription of nearly all RNA polymerase II-dependent genes. Mediator functions as a bridge to convey information from gene-specific regulatory proteins to the basal RNA polymerase II transcription machinery. Mediator is recruited to promoters by direct interactions with regulatory proteins and serves as a scaffold for the assembly of a functional preinitiation complex with RNA polymerase II and the general transcription factors. In Eremothecium gossypii (strain ATCC 10895 / CBS 109.51 / FGSC 9923 / NRRL Y-1056) (Yeast), this protein is Mediator of RNA polymerase II transcription subunit 21 (SRB7).